A 337-amino-acid polypeptide reads, in one-letter code: uncharacterized protein (337 aa).

In terms of domain architecture, AFP-like spans 279–337 (SIVAKRNIKKGEYLSVDNISFKRPGRGIETKYLSIILNRKIKNDKEEDDIIYWDDLLGD).

To B.subtilis SpsE.

This is an uncharacterized protein from Methanocaldococcus jannaschii (strain ATCC 43067 / DSM 2661 / JAL-1 / JCM 10045 / NBRC 100440) (Methanococcus jannaschii).